A 163-amino-acid polypeptide reads, in one-letter code: E1B protein, small T-antigen (163 aa).

This sequence belongs to the adenoviridae E1B 19 kDa protein family.

It localises to the host cell membrane. The protein localises to the host nucleus envelope. Its subcellular location is the host nucleus lamina. In terms of biological role, putative adenovirus Bcl-2 homolog that inhibits apoptosis induced by TNF or FAS pathways, as well as p53-mediated apoptosis. Without E1B 19K function, virus production is compromised because of premature death of host cell. Interacts with Bax protein in cell lysates. This Human adenovirus A serotype 12 (HAdV-12) protein is E1B protein, small T-antigen.